The chain runs to 289 residues: Formamidopyrimidine-DNA glycosylase 1 (289 aa).

Pro2 acts as the Schiff-base intermediate with DNA in catalysis. Glu3 acts as the Proton donor in catalysis. The active-site Proton donor; for beta-elimination activity is the Lys61. Positions 100, 119, and 165 each coordinate DNA. Residues 251–285 form an FPG-type zinc finger; sequence DAYGREGENCRRCGAVIRRERFMNRSSFYCPRCQP. The Proton donor; for delta-elimination activity role is filled by Arg275.

It belongs to the FPG family. Monomer. Requires Zn(2+) as cofactor.

The enzyme catalyses Hydrolysis of DNA containing ring-opened 7-methylguanine residues, releasing 2,6-diamino-4-hydroxy-5-(N-methyl)formamidopyrimidine.. It catalyses the reaction 2'-deoxyribonucleotide-(2'-deoxyribose 5'-phosphate)-2'-deoxyribonucleotide-DNA = a 3'-end 2'-deoxyribonucleotide-(2,3-dehydro-2,3-deoxyribose 5'-phosphate)-DNA + a 5'-end 5'-phospho-2'-deoxyribonucleoside-DNA + H(+). Involved in base excision repair of DNA damaged by oxidation or by mutagenic agents. Acts as a DNA glycosylase that recognizes and removes damaged bases. Has a preference for oxidized purines, such as 7,8-dihydro-8-oxoguanine (8-oxoG) when paired with C, G or T, as well as methyl-faPy (formanidopyrimidine residues) in poly(dG-dC) and spiroiminodihydantoin:C base pairs. Unlike its E.coli ortholog has no activity on 8-oxoG:A. Has AP (apurinic/apyrimidinic) lyase activity and introduces nicks in the DNA strand. Cleaves the DNA backbone by beta-delta elimination to generate a single-strand break at the site of the removed base with both 3'- and 5'-phosphates. Cleaves ssDNA containing an AP site. Complements the H(2)O(2) sensitivity of an M.smegmatis fpg disruption mutant; upon expression in M.smegmatis excises 8-oxoG from dsDNA. The sequence is that of Formamidopyrimidine-DNA glycosylase 1 (fpg1) from Mycobacterium tuberculosis (strain ATCC 25618 / H37Rv).